Here is a 79-residue protein sequence, read N- to C-terminus: MATKKEEVKFEDNLAELENIVRKLESGDVALEDAIAEFQKGMKISETLKKTLNEAEQTLVQIVGKDDNESEFSAEQKEY.

Belongs to the XseB family. In terms of assembly, heterooligomer composed of large and small subunits.

It localises to the cytoplasm. The enzyme catalyses Exonucleolytic cleavage in either 5'- to 3'- or 3'- to 5'-direction to yield nucleoside 5'-phosphates.. In terms of biological role, bidirectionally degrades single-stranded DNA into large acid-insoluble oligonucleotides, which are then degraded further into small acid-soluble oligonucleotides. The sequence is that of Exodeoxyribonuclease 7 small subunit from Lactococcus lactis subsp. cremoris (strain SK11).